Consider the following 240-residue polypeptide: MQTKIKNKRVLVKFSGEALAGDNQFGIDIHVLDHIAKEIRSLVENDIEVGIVIGGGNIIRGVSAAQGGIIRRTSGDYMGMLATVINAVAMQEALEHIGLDTRVQSAIEIKEICESYIYRKAIRHLEKGRVVIFGAGTGNPFFTTDTAATLRAIEIGSDLIIKATKVDGIYDKDPNKFKDAKKLDTLSYNDALIGDIEVMDDTAISLAKDNKLPIVVCNMFKKGNLLQVIKHQQGVFSMVK.

Position 13–16 (13–16 (KFSG)) interacts with ATP. G55 is a UMP binding site. Residues G56 and R60 each coordinate ATP. UMP-binding positions include D76 and 137–144 (TGNPFFTT). Positions 164, 170, and 173 each coordinate ATP.

The protein belongs to the UMP kinase family. Homohexamer.

It localises to the cytoplasm. It carries out the reaction UMP + ATP = UDP + ADP. It participates in pyrimidine metabolism; CTP biosynthesis via de novo pathway; UDP from UMP (UMPK route): step 1/1. Inhibited by UTP. Functionally, catalyzes the reversible phosphorylation of UMP to UDP. The protein is Uridylate kinase of Helicobacter acinonychis (strain Sheeba).